The primary structure comprises 478 residues: Transcript termination protein A18 (478 aa).

Positions 98-254 constitute a Helicase ATP-binding domain; the sequence is KLSTHRPMYM…NDVVNVLKVS (157 aa). 111–118 is a binding site for ATP; the sequence is LSCGFGKT. A DESH box motif is present at residues 204 to 207; the sequence is DESH. A Helicase C-terminal domain is found at 302–454; the sequence is PRNNLIVDTV…IVSVSTDKLG (153 aa). The segment at 456–478 is disordered; the sequence is QQEGKEGTKEEPALTKAFSSQIR. The segment covering 458–468 has biased composition (basic and acidic residues); the sequence is EGKEGTKEEPA.

The protein belongs to the helicase family. Poxviruses subfamily. As to quaternary structure, interacts with G2. Might be part of a transcription complex composed at least of G2, A18, and H5.

It is found in the virion. Functionally, DNA helicase which seems to act as a postreplicative transcription termination factor. Involved in ATP-dependent release of nascent RNA. Forms a stable complex with single-stranded DNA, and to a lesser extent RNA. The protein is Transcript termination protein A18 of Oryctolagus cuniculus (Rabbit).